Reading from the N-terminus, the 576-residue chain is Vacuolar protein sorting-associated protein vps5 (576 aa).

Disordered regions lie at residues 1 to 60 (MLGH…PRKR) and 156 to 198 (DAAS…APQS). At Thr55 the chain carries Phosphothreonine. The segment covering 156-169 (DAASSSAPNFTHTV) has biased composition (polar residues). Positions 170-181 (SSASSQKQGSTS) are enriched in low complexity. Positions 200–317 (TPFYIQVHDP…KLFLEAETFD (118 aa)) constitute a PX domain. A 1,2-diacyl-sn-glycero-3-phospho-(1D-myo-inositol-3-phosphate) is bound by residues Arg244, Lys270, and Arg284. A Phosphoserine modification is found at Ser332.

This sequence belongs to the sorting nexin family. In terms of assembly, component of the retromer complex which consists of vps29, vps26, vps35, vps5 and vps17.

It localises to the cytoplasm. The protein resides in the golgi apparatus. It is found in the membrane. Required for efficient sporulation target of PtdIns(3)P in vesicle transport required for onset of the forespore membrane formation. Functionally, plays a role in vesicular protein sorting. Required for the endosome-to-Golgi retrieval of the vacuolar protein sorting receptor pep1/vps10. Component of the membrane-associated retromer complex which is essential in endosome-to-Golgi retrograde transport. The vps29-vps26-vps35 subcomplex may be involved in cargo selection. This Schizosaccharomyces pombe (strain 972 / ATCC 24843) (Fission yeast) protein is Vacuolar protein sorting-associated protein vps5 (vps5).